Reading from the N-terminus, the 30-residue chain is Cysteine-rich venom protein hematin (30 aa).

It belongs to the CRISP family. In terms of processing, contains 8 disulfide bonds. Expressed by the venom gland.

The protein localises to the secreted. In terms of biological role, inhibits calcium-activated potassium channels (KCa), voltage-gated potassium channel (Kv), and the calcium release channel/ryanodine receptor (RyR). The polypeptide is Cysteine-rich venom protein hematin (Hemachatus haemachatus (Rinkhals)).